The primary structure comprises 473 residues: Benzoyl-CoA oxygenase component B (473 aa).

The protein belongs to the benzoyl-CoA oxygenase component B family. In terms of assembly, monomer. The subunit composition of the active BoxA/BoxB protein complex is not known. It depends on Fe cation as a cofactor.

The catalysed reaction is benzoyl-CoA + NADPH + O2 + H(+) = 2,3-epoxy-2,3-dihydrobenzoyl-CoA + NADP(+) + H2O. The BoxA/BoxB complex catalyzes the aerobic reduction/oxygenation of the aromatic ring of benzoyl-CoA to form 2,3-epoxy-2,3-dihydrobenzoyl-CoA. BoxB acts as the benzoyl-CoA oxygenase, after being reduced by the reductase component BoxA. BoxAB does not act on NADH or benzoate. The chain is Benzoyl-CoA oxygenase component B (boxB) from Aromatoleum evansii (Azoarcus evansii).